Here is a 297-residue protein sequence, read N- to C-terminus: Ribosomal RNA small subunit methyltransferase H (297 aa).

S-adenosyl-L-methionine-binding positions include 37 to 39 (GGH), E56, F87, D102, and H109.

The protein belongs to the methyltransferase superfamily. RsmH family.

It is found in the cytoplasm. It catalyses the reaction cytidine(1402) in 16S rRNA + S-adenosyl-L-methionine = N(4)-methylcytidine(1402) in 16S rRNA + S-adenosyl-L-homocysteine + H(+). Specifically methylates the N4 position of cytidine in position 1402 (C1402) of 16S rRNA. The chain is Ribosomal RNA small subunit methyltransferase H from Borrelia hermsii (strain HS1 / DAH).